The chain runs to 101 residues: Putative septation protein SpoVG (101 aa).

The interval 82-101 is disordered; the sequence is ELKKGGAAPARATGTDPHED.

This sequence belongs to the SpoVG family.

Could be involved in septation. In Anaeromyxobacter dehalogenans (strain 2CP-1 / ATCC BAA-258), this protein is Putative septation protein SpoVG.